We begin with the raw amino-acid sequence, 316 residues long: Transaldolase (316 aa).

Lys-132 (schiff-base intermediate with substrate) is an active-site residue.

It belongs to the transaldolase family. Type 1 subfamily. In terms of assembly, homodimer.

The protein localises to the cytoplasm. It catalyses the reaction D-sedoheptulose 7-phosphate + D-glyceraldehyde 3-phosphate = D-erythrose 4-phosphate + beta-D-fructose 6-phosphate. It functions in the pathway carbohydrate degradation; pentose phosphate pathway; D-glyceraldehyde 3-phosphate and beta-D-fructose 6-phosphate from D-ribose 5-phosphate and D-xylulose 5-phosphate (non-oxidative stage): step 2/3. Transaldolase is important for the balance of metabolites in the pentose-phosphate pathway. This is Transaldolase from Vibrio campbellii (strain ATCC BAA-1116).